Consider the following 327-residue polypeptide: Poly(ribitol-phosphate) beta-N-acetylglucosaminyltransferase TarP (327 aa).

UDP-N-acetyl-alpha-D-glucosamine is bound by residues proline 9, aspartate 41, asparagine 68, arginine 76, and 92–94 (DSD). Position 94 (aspartate 94) interacts with Mn(2+). Catalysis depends on aspartate 181, which acts as the Proton acceptor.

Belongs to the glycosyltransferase 2 family. In terms of assembly, homotrimer. Mn(2+) is required as a cofactor.

It catalyses the reaction 4-O-[(D-ribitylphospho)(n)-di{(2R)-glycerylphospho}]-N-acetyl-beta-D-mannosaminyl-(1-&gt;4)-N-acetyl-alpha-D-glucosaminyl di-trans,octa-cis-undecaprenyl diphosphate + n UDP-N-acetyl-alpha-D-glucosamine = 4-O-([3-N-acetyl-beta-D-glucosaminyl-1-D-ribitylphospho](n)-di{[2R]-1-glycerylphospho})-N-acetyl-beta-D-mannosaminyl-(1-&gt;4)-N-acetyl-alpha-D-glucosaminyl di-trans,octa-cis-undecaprenyl diphosphate + n UDP + n H(+). Its pathway is cell wall biogenesis; poly(ribitol phosphate) teichoic acid biosynthesis. Attaches beta-O-GlcNAc (beta-O-N-acetyl-D-glucosamine) residues to the C3 position of poly(RboP)-wall teichoic acids (WTAs). Attenuates immunogenicity of WTA and protects S.aureus against adaptative host defenses by allowing bacteria to evade recognition by preexisting anti-S.aureus antibodies. Also protects the cell from podophage infection. The sequence is that of Poly(ribitol-phosphate) beta-N-acetylglucosaminyltransferase TarP from Staphylococcus aureus (strain N315).